The chain runs to 318 residues: Mitochondrial coenzyme A transporter SLC25A42 (318 aa).

Solcar repeat units follow at residues 31–117 (RQVL…YKRI), 129–214 (LPPW…LKSL), and 224–312 (PYPF…MQIL). The next 6 helical transmembrane spans lie at 33 to 53 (VLSS…AVAP), 89 to 109 (LWRG…IQFS), 135 to 155 (LLAG…LDLV), 186 to 206 (LYFG…LSFF), 230 to 250 (MVFG…LDVV), and 293 to 313 (LKGP…QILL).

The protein belongs to the mitochondrial carrier (TC 2.A.29) family.

The protein resides in the mitochondrion inner membrane. It catalyses the reaction ADP(out) + CoA(in) = ADP(in) + CoA(out). The enzyme catalyses 3'-dephospho-CoA(in) + ADP(out) = 3'-dephospho-CoA(out) + ADP(in). It carries out the reaction adenosine 3',5'-bisphosphate(in) + ADP(out) = adenosine 3',5'-bisphosphate(out) + ADP(in). The catalysed reaction is AMP(in) + ADP(out) = AMP(out) + ADP(in). It catalyses the reaction dADP(in) + ADP(out) = dADP(out) + ADP(in). The enzyme catalyses ADP(in) + ATP(out) = ADP(out) + ATP(in). Functionally, mitochondrial carrier mediating the transport of coenzyme A (CoA) in mitochondria in exchange for intramitochondrial (deoxy)adenine nucleotides and adenosine 3',5'-diphosphate. In Mus musculus (Mouse), this protein is Mitochondrial coenzyme A transporter SLC25A42 (Slc25a42).